The primary structure comprises 552 residues: Alpha-galactosidase (552 aa).

Residues tryptophan 65, tyrosine 191, 220-221, 325-327, cysteine 368, and arginine 383 contribute to the substrate site; these read DD and KID. Aspartate 327 acts as the Nucleophile in catalysis. The active-site Proton donor/acceptor is the aspartate 387.

Belongs to the glycosyl hydrolase 36 family. In terms of assembly, homodimer.

The catalysed reaction is Hydrolysis of terminal, non-reducing alpha-D-galactose residues in alpha-D-galactosides, including galactose oligosaccharides, galactomannans and galactolipids.. Its activity is regulated as follows. Inhibited by hydrolysis product alpha-galactopyranose and to a lesser extent by beta-galactopyranose, its mutarotational product. Inhibited by synthetic cyclopropyl carbasugars. Functionally, hydrolyzes the short-chain alpha-galactosaccharides raffinose, melibiose and stachyose. The protein is Alpha-galactosidase of Thermotoga maritima (strain ATCC 43589 / DSM 3109 / JCM 10099 / NBRC 100826 / MSB8).